A 334-amino-acid polypeptide reads, in one-letter code: G-protein coupled receptor 12 (334 aa).

Over M1 to D48 the chain is Extracellular. 2 N-linked (GlcNAc...) asparagine glycosylation sites follow: N8 and N24. A helical membrane pass occupies residues I49–I69. Residues F70–P78 are Cytoplasmic-facing. A helical transmembrane segment spans residues M79 to I99. Residues N100–K113 are Extracellular-facing. Residues L114–I134 form a helical membrane-spanning segment. At T135–Y158 the chain is on the cytoplasmic side. The helical transmembrane segment at V159–W179 threads the bilayer. Residues N180–A199 are Extracellular-facing. The chain crosses the membrane as a helical span at residues A200–I220. The Cytoplasmic portion of the chain corresponds to C221–T252. The helical transmembrane segment at L253–I273 threads the bilayer. Topologically, residues A274 to Y282 are extracellular. Residues T283–F303 form a helical membrane-spanning segment. Over R304–V334 the chain is Cytoplasmic. C317 is lipidated: S-palmitoyl cysteine. Phosphoserine is present on residues S330 and S332.

This sequence belongs to the G-protein coupled receptor 1 family. In terms of tissue distribution, expressed predominantly in the forebrain and a lesser extent in the hindbrain. Lower expression in the liver.

The protein resides in the cell membrane. Its function is as follows. Receptor with constitutive G(s) signaling activity that stimulates cyclic AMP production. Promotes neurite outgrowth and blocks myelin inhibition in neurons. This Mus musculus (Mouse) protein is G-protein coupled receptor 12 (Gpr12).